The sequence spans 422 residues: Cytochrome P-450 monooxygenase DoxA (422 aa).

C369 contributes to the heme binding site.

The protein belongs to the cytochrome P450 family. In terms of assembly, monomer. Heme serves as cofactor.

It localises to the cytoplasm. It catalyses the reaction 13-deoxydaunorubicin + NADPH + O2 + H(+) = 13-dihydrodaunorubicin + NADP(+) + H2O. It carries out the reaction 13-dihydrodaunorubicin + NADPH + O2 + H(+) = daunorubicin + NADP(+) + 2 H2O. The enzyme catalyses 13-deoxycarminomycin + NADPH + O2 + H(+) = 13-dihydrocarminomycin + NADP(+) + H2O. The catalysed reaction is 13-dihydrocarminomycin + NADPH + O2 + H(+) = carminomycin + NADP(+) + 2 H2O. It functions in the pathway antibiotic biosynthesis; daunorubicin biosynthesis. Its pathway is antibiotic biosynthesis; carminomycin biosynthesis. Strongly inhibited by dithiothreitol and high ionic strength buffers. Its function is as follows. Involved in the biosynthesis of the anthracyclines carminomycin and daunorubicin (daunomycin) which are aromatic polyketide antibiotics that exhibit high cytotoxicity and are widely applied in the chemotherapy of a variety of cancers. In vivo, DoxA catalyzes the C-13 hydroxylation of 13-deoxycarminomycin and 13-deoxydaunorubicin to yield 13-dihydrocarminomycin and 13-dihydrodaunorubicin, respectively, as well as the oxidation of these 13-dihydro-anthracyclines to their respective 13-keto forms, carminomycin and daunorubicin. In vitro, it also catalyzes the C-14 hydroxylation of daunorubicin to form doxorubicin (adriamycin), although this strain is not a doxorubicin producer. It is not able to accept anthracyclinones (aglycones) and anthracyclines with a 10-carbomethoxyl moiety. 13-oxidation of the anthracyclines possessing the 4-methoxy substitution is greatly favored. The anthracycline analog desacetyladriamycin can be oxidized to 10-hydroxydesacetyladriamycin. It can only use NADP. DoxA acts jointly with DauV. This chain is Cytochrome P-450 monooxygenase DoxA (doxA), found in Streptomyces sp. (strain C5).